We begin with the raw amino-acid sequence, 342 residues long: Heparan sulfate glucosamine 3-O-sulfotransferase 6 (342 aa).

A disordered region spans residues 1-21 (MAGSGGLGGGAGGGQGAGAGQ). At 1-31 (MAGSGGLGGGAGGGQGAGAGQGAALRASRAP) the chain is on the cytoplasmic side. The chain crosses the membrane as a helical; Signal-anchor for type II membrane protein span at residues 32 to 49 (MLLVALVLGAYCLCALPG). The Lumenal segment spans residues 50–342 (RCPPAARAPA…QMTGQDFGWG (293 aa)). Residues 55 to 85 (ARAPAPAPAPSEPSSSVHRPGAPGLPLASGP) form a disordered region. Positions 66 to 85 (EPSSSVHRPGAPGLPLASGP) are enriched in low complexity. A 3'-phosphoadenylyl sulfate-binding site is contributed by 100–104 (KGGTR). Residues 122–128 (EPHFFDR) and 153–156 (KTPS) contribute to the substrate site. The 3'-phosphoadenylyl sulfate site is built by Arg-181 and Ser-189. 220–221 (WS) contacts substrate. N-linked (GlcNAc...) asparagine glycosylation is present at Asn-281. The cysteines at positions 288 and 300 are disulfide-linked. 305 to 309 (KGRPH) is a 3'-phosphoadenylyl sulfate binding site.

This sequence belongs to the sulfotransferase 1 family.

Its subcellular location is the golgi apparatus membrane. It catalyses the reaction alpha-D-glucosaminyl-[heparan sulfate](n) + 3'-phosphoadenylyl sulfate = 3-sulfo-alpha-D-glucosaminyl-[heparan sulfate](n) + adenosine 3',5'-bisphosphate + H(+). Its function is as follows. Sulfotransferase that utilizes 3'-phospho-5'-adenylyl sulfate (PAPS) to catalyze the transfer of a sulfo group to heparan sulfate. The substrate-specific O-sulfation generates an enzyme-modified heparan sulfate which acts as a binding receptor to Herpes Simplex Virus-1 (HSV-1) and permits its entry. Unlike 3-OST-1, does not convert non-anticoagulant heparan sulfate to anticoagulant heparan sulfate. In Homo sapiens (Human), this protein is Heparan sulfate glucosamine 3-O-sulfotransferase 6 (HS3ST6).